A 146-amino-acid chain; its full sequence is Ribosome-binding factor A (146 aa).

The interval 121–146 (KQQQFGSADDVTENDIDEADDTEGKA) is disordered. A compositionally biased stretch (acidic residues) spans 130-146 (DVTENDIDEADDTEGKA).

The protein belongs to the RbfA family. Monomer. Binds 30S ribosomal subunits, but not 50S ribosomal subunits or 70S ribosomes.

Its subcellular location is the cytoplasm. One of several proteins that assist in the late maturation steps of the functional core of the 30S ribosomal subunit. Associates with free 30S ribosomal subunits (but not with 30S subunits that are part of 70S ribosomes or polysomes). Required for efficient processing of 16S rRNA. May interact with the 5'-terminal helix region of 16S rRNA. The sequence is that of Ribosome-binding factor A from Shewanella sp. (strain MR-4).